The following is a 141-amino-acid chain: Protein MGF 100-2L (141 aa).

Belongs to the asfivirus MGF 100 family.

Functionally, plays a role in virus cell tropism, and may be required for efficient virus replication in macrophages. The sequence is that of Protein MGF 100-2L from African swine fever virus (isolate Tick/Malawi/Lil 20-1/1983) (ASFV).